A 306-amino-acid polypeptide reads, in one-letter code: tRNA (guanine-N(1)-)-methyltransferase (306 aa).

S-adenosyl-L-methionine contacts are provided by residues Gly157 and 182–187 (IGDYVL).

It belongs to the RNA methyltransferase TrmD family. In terms of assembly, homodimer.

The protein localises to the cytoplasm. The catalysed reaction is guanosine(37) in tRNA + S-adenosyl-L-methionine = N(1)-methylguanosine(37) in tRNA + S-adenosyl-L-homocysteine + H(+). Functionally, specifically methylates guanosine-37 in various tRNAs. The protein is tRNA (guanine-N(1)-)-methyltransferase of Bifidobacterium adolescentis (strain ATCC 15703 / DSM 20083 / NCTC 11814 / E194a).